Reading from the N-terminus, the 202-residue chain is Imidazoleglycerol-phosphate dehydratase (202 aa).

Belongs to the imidazoleglycerol-phosphate dehydratase family.

Its subcellular location is the cytoplasm. The enzyme catalyses D-erythro-1-(imidazol-4-yl)glycerol 3-phosphate = 3-(imidazol-4-yl)-2-oxopropyl phosphate + H2O. Its pathway is amino-acid biosynthesis; L-histidine biosynthesis; L-histidine from 5-phospho-alpha-D-ribose 1-diphosphate: step 6/9. This is Imidazoleglycerol-phosphate dehydratase from Corynebacterium glutamicum (strain ATCC 13032 / DSM 20300 / JCM 1318 / BCRC 11384 / CCUG 27702 / LMG 3730 / NBRC 12168 / NCIMB 10025 / NRRL B-2784 / 534).